The primary structure comprises 184 residues: Envelope protein 169 (184 aa).

The Intravirion portion of the chain corresponds to 1–6 (MKKYIK). Residues 7-27 (MYLVLLIAIILFITILVIFLI) form a helical membrane-spanning segment. Topologically, residues 28–184 (SGLFYPEQNP…TVMAIPRKVL (157 aa)) are virion surface.

It belongs to the asfivirus envelope protein p22 family.

It localises to the virion membrane. It is found in the host cell membrane. The protein is Envelope protein 169 of Ornithodoros (relapsing fever ticks).